Reading from the N-terminus, the 311-residue chain is CID domain-containing protein 1 (311 aa).

The 134-residue stretch at 1-134 folds into the CID domain; sequence MSDFTEQTLR…RLQEAHQQMK (134 aa). Residues 224–256 are a coiled coil; the sequence is MLEDYVKRLKEETKERESLETNLNMLIQNVRMS.

This is CID domain-containing protein 1 (cids-1) from Caenorhabditis briggsae.